Here is a 568-residue protein sequence, read N- to C-terminus: Nitrite reductase (568 aa).

A signal peptide spans methionine 1–alanine 25. The N-terminal tail stretch occupies residues lysine 26 to proline 54. The 86-residue stretch at aspartate 55–glutamine 140 folds into the Cytochrome c domain. Heme c contacts are provided by cysteine 72, cysteine 75, histidine 76, arginine 96, threonine 109, and methionine 113. Positions proline 141–tyrosine 568 are D1-heme domain. Heme d1-binding residues include histidine 207, arginine 250, serine 251, tyrosine 270, arginine 397, and glutamine 508.

In terms of assembly, homodimer. Heme c serves as cofactor. The cofactor is heme.

The protein localises to the periplasm. The enzyme catalyses nitric oxide + Fe(III)-[cytochrome c] + H2O = Fe(II)-[cytochrome c] + nitrite + 2 H(+). It catalyses the reaction A + NH4(+) + H2O = hydroxylamine + AH2 + H(+). This chain is Nitrite reductase (nirS), found in Pseudomonas aeruginosa (strain ATCC 15692 / DSM 22644 / CIP 104116 / JCM 14847 / LMG 12228 / 1C / PRS 101 / PAO1).